A 1232-amino-acid chain; its full sequence is Dynactin subunit 1 (1232 aa).

The 43-residue stretch at 31–73 (GATLFATGKWVGVILDDSKGKNDGTVQGRRYFTCEENHGIFVR) folds into the CAP-Gly domain. 2 disordered regions span residues 82 to 183 (DGAD…AQVK) and 339 to 358 (SASE…KKNT). Residues 86 to 95 (TTSPETPEPT) show a composition bias toward low complexity. Residues 108-117 (PKSSKLPTRP) show a composition bias toward polar residues. Low complexity predominate over residues 118 to 130 (SSSAASSGTASAS). Over residues 133 to 144 (EISSSEPSTPAQ) the composition is skewed to polar residues. The segment covering 146-163 (PLAAPIIPSPSSAITSPV) has biased composition (low complexity). 4 coiled-coil regions span residues 170–505 (GPSK…KEQQ), 908–1005 (ETVI…RTIE), 1046–1071 (LLLQ…LKAH), and 1136–1166 (AAQL…ETVS). The span at 172 to 183 (SKEEENLRAQVK) shows a compositional bias: basic and acidic residues.

This sequence belongs to the dynactin 150 kDa subunit family. In terms of assembly, monomer and homodimer. Subunit of dynactin, a multiprotein complex part of a tripartite complex with dynein and a adapter, such as BICDL1, BICD2 or HOOK3. The dynactin complex is built around ACTR1A/ACTB filament and consists of an actin-related filament composed of a shoulder domain, a pointed end and a barbed end. Its length is defined by its flexible shoulder domain. The soulder is composed of 2 DCTN1 subunits, 4 DCTN2 and 2 DCTN3. DCTN1/p150(glued) binds directly to microtubules and to cytoplasmic dynein.

The protein resides in the cytoplasm. The protein localises to the cytoskeleton. It is found in the microtubule organizing center. It localises to the centrosome. Its subcellular location is the centriole. The protein resides in the spindle. The protein localises to the cell cortex. Part of the dynactin complex that activates the molecular motor dynein for ultra-processive transport along microtubules. Plays a key role in dynein-mediated retrograde transport of vesicles and organelles along microtubules by recruiting and tethering dynein to microtubules. Binds to both dynein and microtubules providing a link between specific cargos, microtubules and dynein. Essential for targeting dynein to microtubule plus ends, recruiting dynein to membranous cargos and enhancing dynein processivity (the ability to move along a microtubule for a long distance without falling off the track). Can also act as a brake to slow the dynein motor during motility along the microtubule. Can regulate microtubule stability by promoting microtubule formation, nucleation and polymerization and by inhibiting microtubule catastrophe in neurons. Inhibits microtubule catastrophe by binding both to microtubules and to tubulin, leading to enhanced microtubule stability along the axon. Plays a role in metaphase spindle orientation. Plays a role in centriole cohesion and subdistal appendage organization and function. Its recruitment to the centriole in a KIF3A-dependent manner is essential for the maintenance of centriole cohesion and the formation of subdistal appendage. Also required for microtubule anchoring at the mother centriole. Plays a role in primary cilia formation. This chain is Dynactin subunit 1 (dctn1), found in Xenopus laevis (African clawed frog).